We begin with the raw amino-acid sequence, 565 residues long: uncharacterized protein (565 aa).

5 consecutive transmembrane segments (helical) span residues 4–26, 33–55, 68–90, 97–119, and 162–184; these read FVQF…AVWV, GYGL…VGAA, SLLY…VNAL, YAIL…TQFF, and ISAM…IILL. RCK C-terminal domains lie at 210 to 295 and 296 to 379; these read PNVD…LGPE and VPDA…IFGV. 5 consecutive transmembrane segments (helical) span residues 389–411, 415–432, 453–472, 482–504, and 539–561; these read LLTL…PAFG, GLGN…VSSI, LGLI…DLLT, IFIV…GFHI, and WLGF…YFAM.

It belongs to the AAE transporter (TC 2.A.81) family.

The protein resides in the cell membrane. This is an uncharacterized protein from Bordetella parapertussis (strain 12822 / ATCC BAA-587 / NCTC 13253).